We begin with the raw amino-acid sequence, 305 residues long: Tyrosine recombinase XerC (305 aa).

The Core-binding (CB) domain maps to 4–95; sequence TSIQALINKW…AVKNFYRFLE (92 aa). Positions 116 to 298 constitute a Tyr recombinase domain; the sequence is LLPKALSEDD…SIKHLEAVYT (183 aa). Residues arginine 159, lysine 182, histidine 250, arginine 253, and histidine 276 contribute to the active site. Tyrosine 285 functions as the O-(3'-phospho-DNA)-tyrosine intermediate in the catalytic mechanism.

This sequence belongs to the 'phage' integrase family. XerC subfamily. As to quaternary structure, forms a cyclic heterotetrameric complex composed of two molecules of XerC and two molecules of XerD.

The protein resides in the cytoplasm. Functionally, site-specific tyrosine recombinase, which acts by catalyzing the cutting and rejoining of the recombining DNA molecules. The XerC-XerD complex is essential to convert dimers of the bacterial chromosome into monomers to permit their segregation at cell division. It also contributes to the segregational stability of plasmids. The sequence is that of Tyrosine recombinase XerC from Rickettsia massiliae (strain Mtu5).